The following is a 160-amino-acid chain: Cytochrome b6-f complex subunit 4 (160 aa).

Transmembrane regions (helical) follow at residues 36 to 56 (LLYI…GLSV), 95 to 115 (LLGI…PFIE), and 128 to 148 (IAMA…IGAA).

The protein belongs to the cytochrome b family. PetD subfamily. The 4 large subunits of the cytochrome b6-f complex are cytochrome b6, subunit IV (17 kDa polypeptide, PetD), cytochrome f and the Rieske protein, while the 4 small subunits are PetG, PetL, PetM and PetN. The complex functions as a dimer.

The protein localises to the cellular thylakoid membrane. Component of the cytochrome b6-f complex, which mediates electron transfer between photosystem II (PSII) and photosystem I (PSI), cyclic electron flow around PSI, and state transitions. This is Cytochrome b6-f complex subunit 4 from Synechococcus sp. (strain CC9311).